The following is a 285-amino-acid chain: uncharacterized protein (285 aa).

Ser168 provides a ligand contact to substrate. The active-site Proton acceptor is the Tyr181.

It belongs to the short-chain dehydrogenases/reductases (SDR) family.

This is an uncharacterized protein from Haemophilus influenzae (strain ATCC 51907 / DSM 11121 / KW20 / Rd).